Here is a 172-residue protein sequence, read N- to C-terminus: Ribosome maturation factor RimM (172 aa).

The 73-residue stretch at 96-168 (DGEFYYHEII…RVDVELLEGL (73 aa)) folds into the PRC barrel domain.

Belongs to the RimM family. As to quaternary structure, binds ribosomal protein uS19.

Its subcellular location is the cytoplasm. An accessory protein needed during the final step in the assembly of 30S ribosomal subunit, possibly for assembly of the head region. Essential for efficient processing of 16S rRNA. May be needed both before and after RbfA during the maturation of 16S rRNA. It has affinity for free ribosomal 30S subunits but not for 70S ribosomes. This is Ribosome maturation factor RimM from Streptococcus suis (strain 05ZYH33).